A 250-amino-acid chain; its full sequence is Thermostable monoacylglycerol lipase (250 aa).

Phe29 contacts substrate. The Nucleophile role is filled by Ser97. Met98 is a substrate binding site. Active-site charge relay system residues include Asp196 and His226.

This sequence belongs to the lipase/esterase LIP3/BchO family. As to quaternary structure, monomer.

The catalysed reaction is Hydrolyzes glycerol monoesters of long-chain fatty acids.. Its activity is regulated as follows. Not inhibited by cholate, but slightly inhibited by triton X-100 and deoxycholate. Completely inhibited by PMSF (phenylmethylsulfonyl fluoride) at a concentration of 200 uM. Functionally, hydrolyzes monoacylglycerols, with the highest activity occurring with 1-monolauroylglycerol. In Bacillus sp. (strain H-257), this protein is Thermostable monoacylglycerol lipase.